Reading from the N-terminus, the 235-residue chain is Orotidine 5'-phosphate decarboxylase (235 aa).

Residues Asp17, Lys39, 66 to 75 (DLKLHDIGNT), Thr121, Arg182, Gln191, Gly211, and Arg212 each bind substrate. The active-site Proton donor is the Lys68.

It belongs to the OMP decarboxylase family. Type 1 subfamily. Homodimer.

The catalysed reaction is orotidine 5'-phosphate + H(+) = UMP + CO2. It participates in pyrimidine metabolism; UMP biosynthesis via de novo pathway; UMP from orotate: step 2/2. Catalyzes the decarboxylation of orotidine 5'-monophosphate (OMP) to uridine 5'-monophosphate (UMP). The polypeptide is Orotidine 5'-phosphate decarboxylase (Rhodopseudomonas palustris (strain HaA2)).